An 834-amino-acid chain; its full sequence is Translation factor GUF1 homolog, mitochondrial (834 aa).

A mitochondrion-targeting transit peptide spans 1 to 66 (MKLCGVRSSG…RPLLAEPRRY (66 aa)). The 186-residue stretch at 129-314 (ACIRNVSVVA…HIIDKVPPPC (186 aa)) folds into the tr-type G domain. GTP contacts are provided by residues 138 to 145 (AHVDHGKT), 205 to 209 (DTPGH), and 259 to 262 (TKMD). Disordered stretches follow at residues 363-385 (GAASAPVSTASSVSSGTAPASGG) and 476-507 (TGSPATASRTKPATAAETASSDDASGSGSSSV). The span at 488 to 507 (ATAAETASSDDASGSGSSSV) shows a compositional bias: low complexity.

It belongs to the TRAFAC class translation factor GTPase superfamily. Classic translation factor GTPase family. LepA subfamily.

The protein localises to the mitochondrion inner membrane. It catalyses the reaction GTP + H2O = GDP + phosphate + H(+). Its function is as follows. Promotes mitochondrial protein synthesis. May act as a fidelity factor of the translation reaction, by catalyzing a one-codon backward translocation of tRNAs on improperly translocated ribosomes. Binds to mitochondrial ribosomes in a GTP-dependent manner. This chain is Translation factor GUF1 homolog, mitochondrial, found in Leishmania infantum.